The following is a 157-amino-acid chain: S-ribosylhomocysteine lyase (157 aa).

Positions 54, 58, and 126 each coordinate Fe cation.

It belongs to the LuxS family. Homodimer. Fe cation is required as a cofactor.

It carries out the reaction S-(5-deoxy-D-ribos-5-yl)-L-homocysteine = (S)-4,5-dihydroxypentane-2,3-dione + L-homocysteine. Its function is as follows. Involved in the synthesis of autoinducer 2 (AI-2) which is secreted by bacteria and is used to communicate both the cell density and the metabolic potential of the environment. The regulation of gene expression in response to changes in cell density is called quorum sensing. Catalyzes the transformation of S-ribosylhomocysteine (RHC) to homocysteine (HC) and 4,5-dihydroxy-2,3-pentadione (DPD). In Bacillus pumilus (strain SAFR-032), this protein is S-ribosylhomocysteine lyase.